The primary structure comprises 426 residues: MDNSFDIYEIKARQVLDSRGNPTIEAEVLTAGRGYGHAIVPSGASTGTFEAVELRDLGKKYGGKGVLNAVGNVNEIIAPELIGEDSRNQRLIDNIMINLDGTENKANLGANAILAVSMAVARAAADTSSLPLYKYLGGCNSYIMPVPMMNVLNGGKHAGNALDFQEFMIMPIGADSFSDAVRMCAETYQSLKKVISEKYGKDAVNIGDEGGFAPPVKTIDEAFSVLLEGVKRAGYENEIVFTLDSAASEFYDEKTNSYVVLGESLSTDKLIEIYKDMVSKYPIVSIEDPLFEGDFEGFKEITKELKGIQIIGDDIFVTNTNRLKKGIEMNAANALLLKVNQIGTISESIDAANLASRNGYGVIVSHRSGETEDSIISDLTVALNSGQIKTGAPARGERTAKYNQLIRIEEELQISKYAGKNFKIPF.

Gln165 contacts (2R)-2-phosphoglycerate. Glu209 (proton donor) is an active-site residue. Residues Asp244, Glu287, and Asp313 each coordinate Mg(2+). (2R)-2-phosphoglycerate contacts are provided by Lys338, Arg367, Ser368, and Lys389. The active-site Proton acceptor is the Lys338.

Belongs to the enolase family. Requires Mg(2+) as cofactor.

Its subcellular location is the cytoplasm. The protein resides in the secreted. It localises to the cell surface. It catalyses the reaction (2R)-2-phosphoglycerate = phosphoenolpyruvate + H2O. The protein operates within carbohydrate degradation; glycolysis; pyruvate from D-glyceraldehyde 3-phosphate: step 4/5. Functionally, catalyzes the reversible conversion of 2-phosphoglycerate (2-PG) into phosphoenolpyruvate (PEP). It is essential for the degradation of carbohydrates via glycolysis. The sequence is that of Enolase from Methanococcus vannielii (strain ATCC 35089 / DSM 1224 / JCM 13029 / OCM 148 / SB).